The following is a 347-amino-acid chain: Protein RecA (347 aa).

ATP is bound at residue 65 to 72; it reads GPESSGKT. The disordered stretch occupies residues 328-347; it reads SPAQPEAPAAGEKPEQEEEF.

Belongs to the RecA family.

The protein localises to the cytoplasm. In terms of biological role, can catalyze the hydrolysis of ATP in the presence of single-stranded DNA, the ATP-dependent uptake of single-stranded DNA by duplex DNA, and the ATP-dependent hybridization of homologous single-stranded DNAs. It interacts with LexA causing its activation and leading to its autocatalytic cleavage. The protein is Protein RecA of Vibrio parahaemolyticus serotype O3:K6 (strain RIMD 2210633).